Reading from the N-terminus, the 281-residue chain is Diaminopimelate epimerase (281 aa).

Positions 13 and 66 each coordinate substrate. Catalysis depends on Cys-75, which acts as the Proton donor. Substrate-binding positions include 76-77 (GN), Asn-164, Asn-197, and 215-216 (ER). The Proton acceptor role is filled by Cys-224. 225–226 (GT) serves as a coordination point for substrate.

The protein belongs to the diaminopimelate epimerase family. As to quaternary structure, homodimer.

Its subcellular location is the cytoplasm. It carries out the reaction (2S,6S)-2,6-diaminopimelate = meso-2,6-diaminopimelate. The protein operates within amino-acid biosynthesis; L-lysine biosynthesis via DAP pathway; DL-2,6-diaminopimelate from LL-2,6-diaminopimelate: step 1/1. In terms of biological role, catalyzes the stereoinversion of LL-2,6-diaminopimelate (L,L-DAP) to meso-diaminopimelate (meso-DAP), a precursor of L-lysine and an essential component of the bacterial peptidoglycan. In Picosynechococcus sp. (strain ATCC 27264 / PCC 7002 / PR-6) (Agmenellum quadruplicatum), this protein is Diaminopimelate epimerase.